A 187-amino-acid polypeptide reads, in one-letter code: Probable nicotinate-nucleotide adenylyltransferase (187 aa).

The protein belongs to the NadD family.

It carries out the reaction nicotinate beta-D-ribonucleotide + ATP + H(+) = deamido-NAD(+) + diphosphate. Its pathway is cofactor biosynthesis; NAD(+) biosynthesis; deamido-NAD(+) from nicotinate D-ribonucleotide: step 1/1. Its function is as follows. Catalyzes the reversible adenylation of nicotinate mononucleotide (NaMN) to nicotinic acid adenine dinucleotide (NaAD). This is Probable nicotinate-nucleotide adenylyltransferase from Anaeromyxobacter sp. (strain K).